Here is a 187-residue protein sequence, read N- to C-terminus: UPF0301 protein KPK_0728 (187 aa).

The protein belongs to the UPF0301 (AlgH) family.

This chain is UPF0301 protein KPK_0728, found in Klebsiella pneumoniae (strain 342).